A 449-amino-acid chain; its full sequence is Cytochrome P450 monooxygenase iliC (449 aa).

Residues T28–G44 traverse the membrane as a helical segment. C397 is a binding site for heme.

Belongs to the cytochrome P450 family. Requires heme as cofactor.

It localises to the membrane. The enzyme catalyses (3E,5S)-3-[(2E,4E,8S,10E,12Z)-1-hydroxy-4,8-dimethyltetradeca-2,4,10,12-tetraen-1-ylidene]-5-[(4-hydroxyphenyl)methyl]pyrrolidine-2,4-dione + reduced [NADPH--hemoprotein reductase] + O2 = 3-[(2E,4E,8S,10E,12Z)-4,8-dimethyltetradeca-2,4,10,12-tetraenoyl]-4-hydroxy-5-(4-hydroxyphenyl)-1,2-dihydropyridin-2-one + oxidized [NADPH--hemoprotein reductase] + 2 H2O. Its pathway is mycotoxin biosynthesis. In terms of biological role, cytochrome P450 monooxygenase; part of the gene cluster that mediates the biosynthesis of ilicicolin H, a 4-hydroxy-2-pyridonealkaloid that has potent and broad antifungal activities by inhibiting the mitochondrial respiration chain. IliC catalyzes the ring expansion of the tetramate intermediate to the acyclic 2-pyridone intermediate that contains the trans bis-diene chain. The biosynthesis of ilicicolin H starts with formation of the tetramic acid by the hybrid PKS-NRPS synthetase iliA with the partnering trans-enoyl reductase iliB since iliA lacks a designated enoylreductase (ER) domain. The cytochrome P450 monooxygenase iliC then catalyzes the ring expansion of the tetramate to the acyclic 2-pyridone. The pericyclase iliD further converts the acyclic 2-pyridone into 8-epi-ilicicolin H. 8-epi-ilicicolin H might then spontaneously convert to ilicicolin H since ilicicolin H is produced in the absence of the epimerase iliE, in contrast to what was observed for the Talaromyces variabilis ilicolin H biosynthetic pathway. In Hypocrea jecorina (strain QM6a) (Trichoderma reesei), this protein is Cytochrome P450 monooxygenase iliC.